Consider the following 325-residue polypeptide: Phospholipid phosphatase-related protein type 1 (325 aa).

Asn-5 carries N-linked (GlcNAc...) asparagine glycosylation. 3 helical membrane passes run Ile-13 to Tyr-33, Phe-67 to Ile-87, and Phe-127 to Val-147. Residue Asn-163 is glycosylated (N-linked (GlcNAc...) asparagine). The next 3 membrane-spanning stretches (helical) occupy residues Ala-201–Ile-219, Leu-226–Leu-244, and Val-257–His-277. The residue at position 307 (Ser-307) is a Phosphoserine. Residue Asn-316 is glycosylated (N-linked (GlcNAc...) asparagine).

It belongs to the PA-phosphatase related phosphoesterase family. In terms of tissue distribution, highly expressed in the brain. Also found in the liver, kidney and testis. In the brain shows a strongest expression in the hippocampus and cerebellum.

It is found in the cell membrane. The protein localises to the cell projection. It localises to the neuron projection. In terms of biological role, may play a role in neurite outgrowth and neurogenesis. The sequence is that of Phospholipid phosphatase-related protein type 1 from Rattus norvegicus (Rat).